The sequence spans 506 residues: 2-isopropylmalate synthase (506 aa).

One can recognise a Pyruvate carboxyltransferase domain in the interval 6 to 267; sequence IIVFDTTLRD…YTDIVTKEIY (262 aa). Positions 15, 201, 203, and 237 each coordinate Mn(2+). The tract at residues 391 to 506 is regulatory domain; it reads SIQTLSTSSC…LNSYLSMKNR (116 aa).

This sequence belongs to the alpha-IPM synthase/homocitrate synthase family. LeuA type 1 subfamily. Homodimer. It depends on Mn(2+) as a cofactor.

The protein localises to the cytoplasm. It catalyses the reaction 3-methyl-2-oxobutanoate + acetyl-CoA + H2O = (2S)-2-isopropylmalate + CoA + H(+). Its pathway is amino-acid biosynthesis; L-leucine biosynthesis; L-leucine from 3-methyl-2-oxobutanoate: step 1/4. Catalyzes the condensation of the acetyl group of acetyl-CoA with 3-methyl-2-oxobutanoate (2-ketoisovalerate) to form 3-carboxy-3-hydroxy-4-methylpentanoate (2-isopropylmalate). The chain is 2-isopropylmalate synthase from Campylobacter fetus subsp. fetus (strain 82-40).